The chain runs to 593 residues: Epidermal growth factor receptor kinase substrate 8-like protein 3 (593 aa).

Residues 28-155 (QHRVEHLMTC…ALEEELEQRP (128 aa)) form the PTB domain. Disordered stretches follow at residues 149 to 171 (EELE…RGPA), 184 to 239 (LEPG…ERDE), and 374 to 451 (ADWT…PAQP). Position 231 is a phosphoserine (S231). The span at 386 to 401 (PTFSDDWQLPEPSSQA) shows a compositional bias: polar residues. Positions 425-435 (PQEKTHNHDPQ) are enriched in basic and acidic residues. The SH3 domain maps to 450 to 509 (QPALKMQVLYEFEARNPRELTVVQGEKLEVLDHSKRWWLVKNEAGRSGYIPSNILEPLQP).

The protein belongs to the EPS8 family. Interacts with ABI1. Part of a complex that contains SOS1, ABI1 and EPS8L2. Interacts with FASLG.

Its subcellular location is the cytoplasm. The sequence is that of Epidermal growth factor receptor kinase substrate 8-like protein 3 (EPS8L3) from Homo sapiens (Human).